We begin with the raw amino-acid sequence, 221 residues long: Kinetochore protein Spc25 (221 aa).

Residues 63-114 (VIQRREEMEKRVSFMEELAQEVEATKQRNLVMREQIKQQKMLVRQRKNEIME) adopt a coiled-coil conformation.

It belongs to the SPC25 family. In terms of assembly, component of the Ndc80 complex, which is composed of Ndc80, Nuf2 and Spc25.

The protein localises to the nucleus. It localises to the chromosome. Its subcellular location is the centromere. The protein resides in the kinetochore. Functionally, acts as a component of the essential kinetochore-associated Ndc80 complex, which is required for chromosome segregation and spindle checkpoint activity during meiosis and mitosis. Required for kinetochore integrity and the organization of stable microtubule binding sites in the outer plate of the kinetochore. Participates in SAC signaling that responds specifically to disruptions in spindle microtubule dynamics. The NDC80 complex synergistically enhances the affinity of the SKA1 complex for microtubules and may allow the NDC80 complex to track depolymerizing microtubules. This chain is Kinetochore protein Spc25, found in Drosophila eugracilis (Fruit fly).